The sequence spans 238 residues: Protein TIFY 3A (238 aa).

One can recognise a Tify 1 domain in the interval 39 to 74 (EPDASTQLTIIFGGSCRVFNGVPAQKVQEIIRIAFA). The Jas 1 motif lies at 101 to 120 (PIARRRSLQRFLEKRRDRST). The short motif at 103–110 (ARRRSLQR) is the Nuclear localization signal 1 element. The region spanning 125 to 160 (SMILPSQLTIIFGGSFSVFDGIPAEKVQEILHIAAA) is the Tify 2 domain. The short motif at 197–222 (PIARRRSLQRFFEKRRHRFVHTKPYS) is the Jas 2 element. The Nuclear localization signal 2 signature appears at 199–206 (ARRRSLQR). The tract at residues 219–238 (KPYSATTSEADKNETSPIVT) is disordered.

This sequence belongs to the TIFY/JAZ family. As to quaternary structure, interacts with MYC2, MYB21, MYB24, AFPH2/NINJA, TIFY10A/JAZ1, TIFY10B/JAZ2, TIFY6B/JAZ3, TIFY6A/JAZ4, TIFY7/JAZ9 and TIFY9/JAZ10. Ubiquitinated. Targeted for degradation by the SCF(COI1) E3 ubiquitin ligase-proteasome pathway during jasmonate signaling.

The protein localises to the nucleus. Its function is as follows. Repressor of jasmonate (JA) responses. Targets MYC2, MYC3 and MYC4 that are JA-dependent transcription activators. This chain is Protein TIFY 3A (TIFY3A), found in Arabidopsis thaliana (Mouse-ear cress).